Here is a 204-residue protein sequence, read N- to C-terminus: Partner of Y14 and mago (204 aa).

Disordered stretches follow at residues M1–R27 and Q52–P142. The span at E68 to R90 shows a compositional bias: basic and acidic residues. Residues P120–S130 show a composition bias toward polar residues. The stretch at A149–Q181 forms a coiled coil.

It belongs to the pym family. As to quaternary structure, interacts (via N-terminus) with mago and tsu/Y14; the interaction is direct.

It localises to the cytoplasm. The protein localises to the nucleus. Its function is as follows. Regulator of the exon junction complex (EJC), a multiprotein complex that associates immediately upstream of the exon-exon junction on mRNAs and serves as a positional landmarks for the intron exon structure of genes and directs post-transcriptional processes in the cytoplasm such as mRNA export, nonsense-mediated mRNA decay (NMD) or translation. This is Partner of Y14 and mago from Drosophila simulans (Fruit fly).